Reading from the N-terminus, the 397-residue chain is Phosphoglycerate kinase (397 aa).

Substrate is bound by residues aspartate 25–asparagine 27, arginine 41, histidine 64–arginine 67, arginine 118, and arginine 151. ATP is bound by residues lysine 202, glutamate 324, and glycine 350–threonine 353.

This sequence belongs to the phosphoglycerate kinase family. As to quaternary structure, monomer.

It is found in the cytoplasm. The catalysed reaction is (2R)-3-phosphoglycerate + ATP = (2R)-3-phospho-glyceroyl phosphate + ADP. The protein operates within carbohydrate degradation; glycolysis; pyruvate from D-glyceraldehyde 3-phosphate: step 2/5. This chain is Phosphoglycerate kinase, found in Acidovorax ebreus (strain TPSY) (Diaphorobacter sp. (strain TPSY)).